Reading from the N-terminus, the 425-residue chain is Terminal nucleotidyltransferase 5B (425 aa).

The interval 1–42 is disordered; sequence MMPSESGAERRDRAAAQVGTAAATAVATAAPAGGGPDPEALS. Residues 15–31 are compositionally biased toward low complexity; the sequence is AAQVGTAAATAVATAAP.

This sequence belongs to the TENT family.

Its subcellular location is the cytoplasm. The protein localises to the nucleus. It catalyses the reaction RNA(n) + ATP = RNA(n)-3'-adenine ribonucleotide + diphosphate. Functionally, catalyzes the transfer of one adenosine molecule from an ATP to an mRNA poly(A) tail bearing a 3'-OH terminal group in an ATP hydrolysis-dependent manner. May be involved in maintaining the translation efficiency of at least some genes through preventing degradation of their mRNAs. Prefers RNA molecules that are adenosine-rich close to 3'-end. In addition, may inhibit cell proliferation and cell cycle progression through ubiquitination of beta-catenin/CTNNB1. The chain is Terminal nucleotidyltransferase 5B from Homo sapiens (Human).